Here is a 264-residue protein sequence, read N- to C-terminus: Thymidylate synthase (264 aa).

Residues Arg21 and 126 to 127 (RR) contribute to the dUMP site. Catalysis depends on Cys146, which acts as the Nucleophile. DUMP contacts are provided by residues 166–169 (RSAD), Asn177, and 207–209 (HLY). A (6R)-5,10-methylene-5,6,7,8-tetrahydrofolate-binding site is contributed by Asp169. Ala263 is a binding site for (6R)-5,10-methylene-5,6,7,8-tetrahydrofolate.

The protein belongs to the thymidylate synthase family. Bacterial-type ThyA subfamily. In terms of assembly, homodimer.

It is found in the cytoplasm. It catalyses the reaction dUMP + (6R)-5,10-methylene-5,6,7,8-tetrahydrofolate = 7,8-dihydrofolate + dTMP. It participates in pyrimidine metabolism; dTTP biosynthesis. In terms of biological role, catalyzes the reductive methylation of 2'-deoxyuridine-5'-monophosphate (dUMP) to 2'-deoxythymidine-5'-monophosphate (dTMP) while utilizing 5,10-methylenetetrahydrofolate (mTHF) as the methyl donor and reductant in the reaction, yielding dihydrofolate (DHF) as a by-product. This enzymatic reaction provides an intracellular de novo source of dTMP, an essential precursor for DNA biosynthesis. This chain is Thymidylate synthase, found in Afipia carboxidovorans (strain ATCC 49405 / DSM 1227 / KCTC 32145 / OM5) (Oligotropha carboxidovorans).